The chain runs to 719 residues: Serine/threonine-protein kinase PAK 5 (719 aa).

Disordered stretches follow at residues 1-28 (MFGK…FDPQ), 96-118 (RSNS…RIQG), 226-245 (SPLD…TSRC), 253-298 (SESD…PMMP), and 339-372 (VFSP…GSHQ). Positions 11–24 (ISGPSNFEHRVHTG) constitute a CRIB domain. Positions 25-448 (FDPQEQKFTG…VVSPGDPREY (424 aa)) are linker. Phosphoserine is present on Ser104. Residue Thr107 is modified to Phosphothreonine. The segment covering 226 to 244 (SPLDYSFQLTPSRTAGTSR) has biased composition (polar residues). Positions 357 to 372 (LPQSQSKAGYSSGSHQ) are enriched in polar residues. Residues 449–700 (LDNFIKIGEG…AQELLGHPFL (252 aa)) enclose the Protein kinase domain. Residues 455 to 463 (IGEGSTGIV) and Lys478 contribute to the ATP site. The Proton acceptor role is filled by Asp568.

It belongs to the protein kinase superfamily. STE Ser/Thr protein kinase family. STE20 subfamily. As to quaternary structure, interacts tightly with GTP-bound but not GDP-bound CDC42/p21 and RAC1. Interacts with MARK2, leading to inhibit MARK2 independently of kinase activity. Interacts with RHOD and RHOH. Autophosphorylated when activated by CDC42/p21. As to expression, highly expressed in brain and eye. Also expressed in adrenal gland, pancreas, prostate and testes. Within the brain, expression is restricted to neurons. Present in brain but not in kidney, lung and spleen (at protein level).

It is found in the mitochondrion. Its subcellular location is the cytoplasm. It localises to the nucleus. The catalysed reaction is L-seryl-[protein] + ATP = O-phospho-L-seryl-[protein] + ADP + H(+). It carries out the reaction L-threonyl-[protein] + ATP = O-phospho-L-threonyl-[protein] + ADP + H(+). Serine/threonine protein kinase that plays a role in a variety of different signaling pathways including cytoskeleton regulation, cell migration, proliferation or cell survival. Activation by various effectors including growth factor receptors or active CDC42 and RAC1 results in a conformational change and a subsequent autophosphorylation on several serine and/or threonine residues. Phosphorylates the proto-oncogene RAF1 and stimulates its kinase activity. Promotes cell survival by phosphorylating the BCL2 antagonist of cell death BAD. Phosphorylates CTNND1, probably to regulate cytoskeletal organization and cell morphology. Keeps microtubules stable through MARK2 inhibition and destabilizes the F-actin network leading to the disappearance of stress fibers and focal adhesions. This chain is Serine/threonine-protein kinase PAK 5, found in Mus musculus (Mouse).